The sequence spans 249 residues: MRRKIIAANWKMYKTCAETESFIKEFKELSKGYEEKEIVICPPFTSLYVANKLLEDTPIKLGAQNMFWEKEGAYTGEISPIMLKDLNCSYVIIGHSERRQYFSETNDMINKKLKSAFEYELIPIFCVGEKWEEREKGKTEEVITEQVKKGLQGLEKEKVEKIVIAYEPVWAIGTGHSAKGEDANEVAKLIRRIISEIYDEEVSQKVRIQYGGSVNPQNIKEFLAQSEIDGALVGGASLKPQSFWDIVRS.

9-11 provides a ligand contact to substrate; sequence NWK. His95 (electrophile) is an active-site residue. Residue Glu167 is the Proton acceptor of the active site. Substrate is bound by residues Gly173, Ser213, and 234-235; that span reads GG.

This sequence belongs to the triosephosphate isomerase family. Homodimer.

It localises to the cytoplasm. It catalyses the reaction D-glyceraldehyde 3-phosphate = dihydroxyacetone phosphate. It participates in carbohydrate biosynthesis; gluconeogenesis. It functions in the pathway carbohydrate degradation; glycolysis; D-glyceraldehyde 3-phosphate from glycerone phosphate: step 1/1. In terms of biological role, involved in the gluconeogenesis. Catalyzes stereospecifically the conversion of dihydroxyacetone phosphate (DHAP) to D-glyceraldehyde-3-phosphate (G3P). This chain is Triosephosphate isomerase, found in Dictyoglomus turgidum (strain DSM 6724 / Z-1310).